The primary structure comprises 396 residues: S-adenosylmethionine synthase (396 aa).

His-15 is a binding site for ATP. Position 17 (Asp-17) interacts with Mg(2+). A K(+)-binding site is contributed by Glu-43. Residues Glu-56 and Gln-99 each contribute to the L-methionine site. Positions 99 to 109 (QSSDIAMGVDK) are flexible loop. ATP contacts are provided by residues 175-177 (DGK), 241-242 (RF), Asp-250, 256-257 (RK), Ala-273, and Lys-277. Asp-250 lines the L-methionine pocket. Position 281 (Lys-281) interacts with L-methionine.

It belongs to the AdoMet synthase family. Homotetramer; dimer of dimers. It depends on Mg(2+) as a cofactor. K(+) serves as cofactor.

It is found in the cytoplasm. The catalysed reaction is L-methionine + ATP + H2O = S-adenosyl-L-methionine + phosphate + diphosphate. It functions in the pathway amino-acid biosynthesis; S-adenosyl-L-methionine biosynthesis; S-adenosyl-L-methionine from L-methionine: step 1/1. Its function is as follows. Catalyzes the formation of S-adenosylmethionine (AdoMet) from methionine and ATP. The overall synthetic reaction is composed of two sequential steps, AdoMet formation and the subsequent tripolyphosphate hydrolysis which occurs prior to release of AdoMet from the enzyme. The sequence is that of S-adenosylmethionine synthase from Ruminiclostridium cellulolyticum (strain ATCC 35319 / DSM 5812 / JCM 6584 / H10) (Clostridium cellulolyticum).